The following is a 112-amino-acid chain: Protein lin-52 homolog (112 aa).

Belongs to the lin-52 family. Component of the DREAM complex.

This Gallus gallus (Chicken) protein is Protein lin-52 homolog (LIN52).